The following is an 831-amino-acid chain: Translation initiation factor IF-2 (831 aa).

Basic and acidic residues predominate over residues 1–11 (MADEIKKENAP). Residues 1-236 (MADEIKKENA…GKHAKKASAL (236 aa)) are disordered. Residues 22 to 31 (TTVSGTSTTG) are compositionally biased toward low complexity. Composition is skewed to basic and acidic residues over residues 49 to 150 (DLER…RYAD) and 157 to 166 (DNGKLDDYSD). Residues 190–200 (RSKNKVVKAKK) show a composition bias toward basic residues. Positions 201-225 (GGRDDENGNKNERQSDRRNQKDVKG) are enriched in basic and acidic residues. In terms of domain architecture, tr-type G spans 330 to 500 (HRAPVVTIMG…LLQSEVLELT (171 aa)). Positions 339–346 (GHVDHGKT) are G1. A GTP-binding site is contributed by 339–346 (GHVDHGKT). Positions 364 to 368 (GITQH) are G2. A G3 region spans residues 386–389 (DTPG). GTP-binding positions include 386–390 (DTPGH) and 440–443 (NKID). Residues 440-443 (NKID) are G4. The segment at 476–478 (SAK) is G5.

It belongs to the TRAFAC class translation factor GTPase superfamily. Classic translation factor GTPase family. IF-2 subfamily.

It localises to the cytoplasm. Functionally, one of the essential components for the initiation of protein synthesis. Protects formylmethionyl-tRNA from spontaneous hydrolysis and promotes its binding to the 30S ribosomal subunits. Also involved in the hydrolysis of GTP during the formation of the 70S ribosomal complex. This chain is Translation initiation factor IF-2, found in Histophilus somni (strain 2336) (Haemophilus somnus).